The primary structure comprises 461 residues: MEREGIWHSTLGETWEPNNWLEGQQDSHLSQVGVTHKETFTEMRVCGGNEFERCSSQDSILDTQQSIPMVKRPHNCNSHGEDATQNSELIKTQRMFVGKKIYECNQCSKTFSQSSSLLKHQRIHTGEKPYKCNVCGKHFIERSSLTVHQRIHTGEKPYKCNECGKAFSQSMNLTVHQRTHTGEKPYQCKECGKAFHKNSSLIQHERIHTGEKPYKCNECGKAFTQSMNLTVHQRTHTGEKPYECNECGKAFSQSMHLIVHQRSHTGEKPYECSQCGKAFSKSSTLTLHQRNHTGEKPYKCNKCGKSFSQSTYLIEHQRLHSGVKPFECNECGKAFSKNSSLTQHRRIHTGEKPYECMVCGKHFTGRSSLTVHQVIHTGEKPYECNECGKAFSQSAYLIEHQRIHTGEKPYECDQCGKAFIKNSSLTVHQRTHTGEKPYQCNECGKAFSRSTNLTRHQRTHT.

13 C2H2-type zinc fingers span residues 102–124 (YECN…QRIH), 130–152 (YKCN…QRIH), 158–180 (YKCN…QRTH), 186–208 (YQCK…ERIH), 214–236 (YKCN…QRTH), 242–264 (YECN…QRSH), 270–292 (YECS…QRNH), 298–320 (YKCN…QRLH), 326–348 (FECN…RRIH), 354–376 (YECM…QVIH), 382–404 (YECN…QRIH), 410–432 (YECD…QRTH), and 438–460 (YQCN…QRTH).

Belongs to the krueppel C2H2-type zinc-finger protein family.

It is found in the nucleus. Its function is as follows. Probable transcription factor involved in neuronal differentiation and/or phenotypic maintenance. The chain is Zinc finger protein ZFP2 (ZFP2) from Homo sapiens (Human).